Consider the following 127-residue polypeptide: Large ribosomal subunit protein bL20 (127 aa).

The protein belongs to the bacterial ribosomal protein bL20 family.

Binds directly to 23S ribosomal RNA and is necessary for the in vitro assembly process of the 50S ribosomal subunit. It is not involved in the protein synthesizing functions of that subunit. This Bifidobacterium longum (strain NCC 2705) protein is Large ribosomal subunit protein bL20.